Here is a 334-residue protein sequence, read N- to C-terminus: Geranylgeranyl pyrophosphate synthase ltmG (334 aa).

3 residues coordinate isopentenyl diphosphate: lysine 53, arginine 56, and histidine 85. Aspartate 92 and aspartate 96 together coordinate Mg(2+). Arginine 101 contributes to the dimethylallyl diphosphate binding site. Arginine 102 lines the isopentenyl diphosphate pocket. Residues lysine 179, threonine 180, and glutamine 213 each coordinate dimethylallyl diphosphate. Aspartate 216 contacts Mg(2+). The dimethylallyl diphosphate site is built by asparagine 220, lysine 230, and lysine 240.

This sequence belongs to the FPP/GGPP synthase family. The cofactor is Mg(2+).

It catalyses the reaction isopentenyl diphosphate + dimethylallyl diphosphate = (2E)-geranyl diphosphate + diphosphate. It carries out the reaction isopentenyl diphosphate + (2E)-geranyl diphosphate = (2E,6E)-farnesyl diphosphate + diphosphate. The enzyme catalyses isopentenyl diphosphate + (2E,6E)-farnesyl diphosphate = (2E,6E,10E)-geranylgeranyl diphosphate + diphosphate. Its pathway is secondary metabolite biosynthesis. Geranylgeranyl pyrophosphate synthase; part of the gene cluster that mediates the biosynthesis of lolitrems, indole-diterpene mycotoxins that are potent tremorgens in mammals, and are synthesized by clavicipitaceous fungal endophytes in association with their grass hosts. The geranylgeranyl diphosphate (GGPP) synthase ltmG is proposed to catalyze the first step in lolitrem biosynthesis. LtmG catalyzes a series of iterative condensations of isopentenyl diphosphate (IPP) with dimethylallyl diphosphate (DMAPP), geranyl diphosphate (GPP), and farnesyl diphosphate (FPP), to form GGPP. GGPP then condenses with indole-3-glycerol phosphate to form 3-geranylgeranylindole, an acyclic intermediate, to be incorporated into paxilline. Either ltmG or ltmC could be responsible for this step, as both are putative prenyl transferases. The FAD-dependent monooxygenase ltmM then catalyzes the epoxidation of the two terminal alkenes of the geranylgeranyl moiety, which is subsequently cyclized by ltmB, to paspaline. The cytochrome P450 monooxygenases ltmQ and ltmP can sequentially oxidize paspaline to terpendole E and terpendole F. Alternatively, ltmP converts paspaline to an intermediate which is oxidized by ltmQ to terpendole F. LtmF, ltmK, ltmE and ltmJ appear to be unique to the epichloe endophytes. The prenyltransferase ltmF is involved in the 27-hydroxyl-O-prenylation. The cytochrome P450 monooxygenase ltmK is required for the oxidative acetal ring formation. The multi-functional prenyltransferase ltmE is required for C20- and C21-prenylations of the indole ring of paspalanes and acts together with the cytochrome P450 monooxygenase ltmJ to yield lolitremanes by multiple oxidations and ring closures. The stereoisomer pairs of lolitriol and lolitrem N or lolitrem B and lolitrem F may be attributed to variations in the way in which ring closure can occur under the action of ltmJ. While the major product of this pathway is lolitrem B, the prenyl transferases and cytochrome P450 monooxygenases identified in this pathway have a remarkable versatility in their regio- and stereo-specificities to generate a diverse range of metabolites that are products of a metabolic grid rather than a linear pathway. This chain is Geranylgeranyl pyrophosphate synthase ltmG, found in Epichloe festucae (strain Fl1).